The primary structure comprises 121 residues: MANNSVSYLVLLLLVFVLAISESAPVQYCDRVTNLYHEKCDEKQCTEHCKTNEKAESGYCLVVEKQQLSICSFDCSKYKPSTPAPPPPPPKLFYSGSWLQAKVENVMLPGQKNMNCTQCPK.

The signal sequence occupies residues 1 to 21; that stretch reads MANNSVSYLVLLLLVFVLAIS. N-linked (GlcNAc...) asparagine glycosylation occurs at Asn-115.

In terms of tissue distribution, epidermal anther cells.

It is found in the secreted. The protein localises to the cell wall. Its function is as follows. Anther-specific cell wall protein which could contribute to the cell wall architecture of epidermal anther cells via intermolecular disulfide bridges. The polypeptide is Anther-specific protein SF2 (Helianthus annuus (Common sunflower)).